The following is a 349-amino-acid chain: Holliday junction branch migration complex subunit RuvB (349 aa).

The segment at 1–185 (MSQEKERLIS…FGSIFRLDFY (185 aa)) is large ATPase domain (RuvB-L). ATP-binding positions include Leu24, Arg25, Gly66, Lys69, Thr70, Thr71, 132-134 (EDY), Arg175, Tyr185, and Arg222. A Mg(2+)-binding site is contributed by Thr70. The segment at 186–256 (DEEAIHDIVR…IAAESLACLE (71 aa)) is small ATPAse domain (RuvB-S). The tract at residues 259–349 (KLGLDEIDHK…QQGLWTENGS (91 aa)) is head domain (RuvB-H). The DNA site is built by Arg314 and Arg319.

The protein belongs to the RuvB family. Homohexamer. Forms an RuvA(8)-RuvB(12)-Holliday junction (HJ) complex. HJ DNA is sandwiched between 2 RuvA tetramers; dsDNA enters through RuvA and exits via RuvB. An RuvB hexamer assembles on each DNA strand where it exits the tetramer. Each RuvB hexamer is contacted by two RuvA subunits (via domain III) on 2 adjacent RuvB subunits; this complex drives branch migration. In the full resolvosome a probable DNA-RuvA(4)-RuvB(12)-RuvC(2) complex forms which resolves the HJ.

The protein resides in the cytoplasm. It carries out the reaction ATP + H2O = ADP + phosphate + H(+). Its function is as follows. The RuvA-RuvB-RuvC complex processes Holliday junction (HJ) DNA during genetic recombination and DNA repair, while the RuvA-RuvB complex plays an important role in the rescue of blocked DNA replication forks via replication fork reversal (RFR). RuvA specifically binds to HJ cruciform DNA, conferring on it an open structure. The RuvB hexamer acts as an ATP-dependent pump, pulling dsDNA into and through the RuvAB complex. RuvB forms 2 homohexamers on either side of HJ DNA bound by 1 or 2 RuvA tetramers; 4 subunits per hexamer contact DNA at a time. Coordinated motions by a converter formed by DNA-disengaged RuvB subunits stimulates ATP hydrolysis and nucleotide exchange. Immobilization of the converter enables RuvB to convert the ATP-contained energy into a lever motion, pulling 2 nucleotides of DNA out of the RuvA tetramer per ATP hydrolyzed, thus driving DNA branch migration. The RuvB motors rotate together with the DNA substrate, which together with the progressing nucleotide cycle form the mechanistic basis for DNA recombination by continuous HJ branch migration. Branch migration allows RuvC to scan DNA until it finds its consensus sequence, where it cleaves and resolves cruciform DNA. The polypeptide is Holliday junction branch migration complex subunit RuvB (Dehalococcoides mccartyi (strain CBDB1)).